We begin with the raw amino-acid sequence, 734 residues long: 5-methyltetrahydropteroyltriglutamate--homocysteine methyltransferase (734 aa).

5-methyltetrahydropteroyltri-L-glutamate is bound by residues 15–18 and Lys104; that span reads REFK. Residues 409-411 and Glu462 contribute to the L-homocysteine site; that span reads IGS. L-methionine contacts are provided by residues 409–411 and Glu462; that span reads IGS. Residues 493–494 and Trp539 each bind 5-methyltetrahydropteroyltri-L-glutamate; that span reads RC. Residue Asp577 participates in L-homocysteine binding. Residue Asp577 coordinates L-methionine. Glu583 provides a ligand contact to 5-methyltetrahydropteroyltri-L-glutamate. Zn(2+) is bound by residues His618, Cys620, and Glu642. Catalysis depends on His672, which acts as the Proton donor. Zn(2+) is bound at residue Cys704.

This sequence belongs to the vitamin-B12 independent methionine synthase family. It depends on Zn(2+) as a cofactor.

It carries out the reaction 5-methyltetrahydropteroyltri-L-glutamate + L-homocysteine = tetrahydropteroyltri-L-glutamate + L-methionine. It functions in the pathway amino-acid biosynthesis; L-methionine biosynthesis via de novo pathway; L-methionine from L-homocysteine (MetE route): step 1/1. Catalyzes the transfer of a methyl group from 5-methyltetrahydrofolate to homocysteine resulting in methionine formation. In Thermotoga maritima (strain ATCC 43589 / DSM 3109 / JCM 10099 / NBRC 100826 / MSB8), this protein is 5-methyltetrahydropteroyltriglutamate--homocysteine methyltransferase.